The following is a 331-amino-acid chain: Ketol-acid reductoisomerase (NADP(+)) (331 aa).

The KARI N-terminal Rossmann domain occupies Ala-2–Thr-182. NADP(+) contacts are provided by residues Tyr-25–Gln-28, Ser-51, Ser-53, and Asp-83–Gln-86. His-108 is a catalytic residue. Gly-134 contributes to the NADP(+) binding site. A KARI C-terminal knotted domain is found at Thr-183–Leu-328. 4 residues coordinate Mg(2+): Asp-191, Glu-195, Glu-227, and Glu-231. Substrate is bound at residue Ser-252.

Belongs to the ketol-acid reductoisomerase family. Mg(2+) serves as cofactor.

It catalyses the reaction (2R)-2,3-dihydroxy-3-methylbutanoate + NADP(+) = (2S)-2-acetolactate + NADPH + H(+). The enzyme catalyses (2R,3R)-2,3-dihydroxy-3-methylpentanoate + NADP(+) = (S)-2-ethyl-2-hydroxy-3-oxobutanoate + NADPH + H(+). It functions in the pathway amino-acid biosynthesis; L-isoleucine biosynthesis; L-isoleucine from 2-oxobutanoate: step 2/4. The protein operates within amino-acid biosynthesis; L-valine biosynthesis; L-valine from pyruvate: step 2/4. In terms of biological role, involved in the biosynthesis of branched-chain amino acids (BCAA). Catalyzes an alkyl-migration followed by a ketol-acid reduction of (S)-2-acetolactate (S2AL) to yield (R)-2,3-dihydroxy-isovalerate. In the isomerase reaction, S2AL is rearranged via a Mg-dependent methyl migration to produce 3-hydroxy-3-methyl-2-ketobutyrate (HMKB). In the reductase reaction, this 2-ketoacid undergoes a metal-dependent reduction by NADPH to yield (R)-2,3-dihydroxy-isovalerate. The polypeptide is Ketol-acid reductoisomerase (NADP(+)) (Nostoc sp. (strain PCC 7120 / SAG 25.82 / UTEX 2576)).